The primary structure comprises 196 residues: Adenylate kinase (196 aa).

Residue 9–17 (GIPGVGKST) coordinates ATP.

The protein belongs to the archaeal adenylate kinase family.

It localises to the cytoplasm. It catalyses the reaction AMP + ATP = 2 ADP. This chain is Adenylate kinase, found in Pyrococcus furiosus (strain ATCC 43587 / DSM 3638 / JCM 8422 / Vc1).